The sequence spans 199 residues: Cytochrome c oxidase subunit 2 (199 aa).

The chain crosses the membrane as a helical span at residues 1–13 (AICSLVLYLLTLM). At 14-26 (LMEKLSSNSVDAQ) the chain is on the mitochondrial matrix side. The helical transmembrane segment at 27 to 54 (EVELVWTILPAIVLILLALPSLQILYMM) threads the bilayer. At 55–199 (DEIDEPDLTL…SSLLSTSSSL (145 aa)) the chain is on the mitochondrial intermembrane side. His128, Cys163, Glu165, Cys167, His171, and Met174 together coordinate Cu cation. Residue Glu165 coordinates Mg(2+).

The protein belongs to the cytochrome c oxidase subunit 2 family. As to quaternary structure, component of the cytochrome c oxidase (complex IV, CIV), a multisubunit enzyme composed of 14 subunits. The complex is composed of a catalytic core of 3 subunits MT-CO1, MT-CO2 and MT-CO3, encoded in the mitochondrial DNA, and 11 supernumerary subunits COX4I, COX5A, COX5B, COX6A, COX6B, COX6C, COX7A, COX7B, COX7C, COX8 and NDUFA4, which are encoded in the nuclear genome. The complex exists as a monomer or a dimer and forms supercomplexes (SCs) in the inner mitochondrial membrane with NADH-ubiquinone oxidoreductase (complex I, CI) and ubiquinol-cytochrome c oxidoreductase (cytochrome b-c1 complex, complex III, CIII), resulting in different assemblies (supercomplex SCI(1)III(2)IV(1) and megacomplex MCI(2)III(2)IV(2)). Found in a complex with TMEM177, COA6, COX18, COX20, SCO1 and SCO2. Interacts with TMEM177 in a COX20-dependent manner. Interacts with COX20. Interacts with COX16. The cofactor is Cu cation.

It localises to the mitochondrion inner membrane. It carries out the reaction 4 Fe(II)-[cytochrome c] + O2 + 8 H(+)(in) = 4 Fe(III)-[cytochrome c] + 2 H2O + 4 H(+)(out). Component of the cytochrome c oxidase, the last enzyme in the mitochondrial electron transport chain which drives oxidative phosphorylation. The respiratory chain contains 3 multisubunit complexes succinate dehydrogenase (complex II, CII), ubiquinol-cytochrome c oxidoreductase (cytochrome b-c1 complex, complex III, CIII) and cytochrome c oxidase (complex IV, CIV), that cooperate to transfer electrons derived from NADH and succinate to molecular oxygen, creating an electrochemical gradient over the inner membrane that drives transmembrane transport and the ATP synthase. Cytochrome c oxidase is the component of the respiratory chain that catalyzes the reduction of oxygen to water. Electrons originating from reduced cytochrome c in the intermembrane space (IMS) are transferred via the dinuclear copper A center (CU(A)) of subunit 2 and heme A of subunit 1 to the active site in subunit 1, a binuclear center (BNC) formed by heme A3 and copper B (CU(B)). The BNC reduces molecular oxygen to 2 water molecules using 4 electrons from cytochrome c in the IMS and 4 protons from the mitochondrial matrix. The chain is Cytochrome c oxidase subunit 2 (MT-CO2) from Apteryx australis (Southern brown kiwi).